Here is a 266-residue protein sequence, read N- to C-terminus: Uracil-DNA glycosylase (266 aa).

Residues 1-25 (MTRRADPAQATLFDDDEPAGAPTAT) form a disordered region. D97 acts as the Proton acceptor in catalysis.

Belongs to the uracil-DNA glycosylase (UDG) superfamily. UNG family.

It is found in the cytoplasm. The enzyme catalyses Hydrolyzes single-stranded DNA or mismatched double-stranded DNA and polynucleotides, releasing free uracil.. Its function is as follows. Excises uracil residues from the DNA which can arise as a result of misincorporation of dUMP residues by DNA polymerase or due to deamination of cytosine. In Ralstonia nicotianae (strain ATCC BAA-1114 / GMI1000) (Ralstonia solanacearum), this protein is Uracil-DNA glycosylase.